The sequence spans 308 residues: Putative ankyrin repeat protein R835 (308 aa).

6 ANK repeats span residues 100–129 (DINEAIKNIIIVNNIDSLKYLLEKGANIDL), 152–181 (PMNKFLPIAVEYGHLNLVKFLVEKGVYVDF), 190–217 (SEYTPLVAACSAGHIKIVEYLIEKGANY), 218–247 (KSSYGVYLAAEKGHYDIVKFLIDKGTDLEK), 249–277 (GLRSLNEVIKKGHFDIMKLFINSGLEIDY), and 279–305 (YYIYKAGLRGHTDIVKYLVMMQMSKQI).

This Acanthamoeba polyphaga (Amoeba) protein is Putative ankyrin repeat protein R835.